The following is a 613-amino-acid chain: Envelope glycoprotein gp95 (613 aa).

Positions 1 to 62 (MEAVIKAVLT…VLCEVTGVRA (62 aa)) are cleaved as a signal peptide. The disordered stretch occupies residues 14–36 (GETSKKDSKKKPPATSKKDPEKT). The Extracellular segment spans residues 63-559 (DVHLLEQPGN…EWAVHLLKGL (497 aa)). Cystine bridges form between Cys-87–Cys-506, Cys-121–Cys-151, Cys-191–Cys-252, Cys-265–Cys-275, Cys-360–Cys-377, Cys-417–Cys-453, and Cys-498–Cys-505. N-linked (GlcNAc...) asparagine; by host glycans are attached at residues Asn-120, Asn-140, Asn-157, Asn-177, Asn-230, Asn-264, Asn-271, Asn-297, Asn-303, Asn-313, and Asn-321. Residues 184-233 (IPSVAGGCIGFTPYDSPAGVYGWDRREVTHILLTDPGNNPFFDKASNSSK) are binding to host receptor. The segment at 268–294 (MRQNWSICQDVWGRGPPENWCTSTGGT) is binding to host receptor. Residues Asn-388 and Asn-398 are each glycosylated (N-linked (GlcNAc...) asparagine; by host). Positions 425–445 (GPTARIFASILAPGVAAAQAL) are fusion peptide. Asn-460 is a glycosylation site (N-linked (GlcNAc...) asparagine; by host). The interval 481–497 (LQNRAAIDFLLLAHGHG) is immunosuppression. An N-linked (GlcNAc...) asparagine; by host glycan is attached at Asn-508. The chain crosses the membrane as a helical span at residues 560-580 (LLGLVVILLLVVCLPCLLQIV). 2 S-palmitoyl cysteine; by host lipidation sites follow: Cys-572 and Cys-575. At 581 to 613 (CGNIRKMINNSISYHTEYKKLQKAYGQPESRIV) the chain is on the extracellular side. N-linked (GlcNAc...) asparagine; by host glycosylation is present at Asn-589.

Belongs to the Alpharetroviruses envelope glycoprotein family. As to quaternary structure, heterodimer with the transmembrane protein. The mature envelope protein (Env) consists of a trimer of SU-TM heterodimers attached by a labile interchain disulfide bond. Interacts with the host cell entry receptor TVB-S3; this interaction allows the viral attachment. Heterodimer with the surface protein. The mature envelope protein (Env) consists of a trimer of SU-TM heterodimers attached by a labile interchain disulfide bond. In terms of processing, specific enzymatic cleavages in vivo yield mature proteins. Envelope glycoproteins are synthesized as an inactive precursor that is N-glycosylated and processed likely by host cell furin or by a furin-like protease in the Golgi to yield the mature SU and TM proteins. The cleavage site between SU and TM requires the minimal sequence [KR]-X-[KR]-R. The transmembrane protein is palmitoylated. Palmitoylation is necessary for glycoprotein function and infectivity.

The protein localises to the virion membrane. The protein resides in the host cell membrane. Its function is as follows. The surface protein (SU) attaches the virus to the host cell entry receptor TVB-S3/CAR1. This interaction triggers the refolding of the transmembrane protein (TM) thereby unmasking its fusion peptide and the formation of a reactive thiolate on Cys-100 to activate its fusogenic potential. Fusion occurs at the host cell plasma membrane. Functionally, the transmembrane protein (TM) acts as a class I viral fusion protein. Under the current model, the protein has at least 3 conformational states: pre-fusion native state, pre-hairpin intermediate state, and post-fusion hairpin state. During viral and target cell membrane fusion, the coiled coil regions (heptad repeats) assume a trimer-of-hairpins structure, positioning the fusion peptide in close proximity to the C-terminal region of the ectodomain. The formation of this structure appears to drive apposition and subsequent fusion of viral and target cell membranes. Membranes fusion leads to delivery of the nucleocapsid into the cytoplasm. The protein is Envelope glycoprotein gp95 (env) of Rous sarcoma virus subgroup B (strain Schmidt-Ruppin) (RSV-SR-B).